The primary structure comprises 61 residues: Potassium channel toxin alpha-KTx 5.3 (61 aa).

Positions 1-28 (MHNYYKIVLIMVAFFAVIITFSNIQVEG) are cleaved as a signal peptide. 3 disulfides stabilise this stretch: Cys31/Cys49, Cys36/Cys54, and Cys40/Cys56. The [R/K]XCQ motif stretch occupies residues 34–37 (KRCQ). His59 is modified (histidine amide).

This sequence belongs to the short scorpion toxin superfamily. Potassium channel inhibitor family. Alpha-KTx 05 subfamily. As to expression, expressed by the venom gland.

The protein resides in the secreted. Its function is as follows. Blocks small conductance calcium-activated potassium channels (KCNN, SK). Has also been shown to weakly inhibit Kv11.1/KCNH2/ERG1, Kv1.2/KCNA2, Kv1.3/KCNA3 and Kv2.1/KCNB1 voltage-gated potassium channels. In Olivierus martensii (Manchurian scorpion), this protein is Potassium channel toxin alpha-KTx 5.3.